A 1877-amino-acid polypeptide reads, in one-letter code: MILKSFLLGNPVSLCMNIINSVVMVGLYYGFLTTFSIGPSYLFLLRARVLEEGEEGTEKKVSATTGFIAGQLMMFISIYYAPLHLALGRPHTITVLALPYLLFHFFWNNHKHFFDYGSTTRNSMRNLSIQCVFLNNLIFQLFNHFILPSSMLARLVNIYMFRCNNKMLFVTSSFVGWLIGHIFFMKWVELVLVWIQQNNSIRSNKYIRSNKYLVSELRNSMARIFSILLFITCVYYLGRIPSPIVTKKFKETSETEERGEGEEETDVEIETTFETKGTRQEQEGSTEEDPSLFSEEKEDPDKIDEREEIRVNEKEKTRDEFNFQETFYKDSQVYKTSYMDRNKNKENSKLEIFKLKEDPFFLWFEKPLVTLLFDYKRWNRPLRYIKNNHFENAVRNEVSQYFFYICRNNGKERISFTYPPSLSTFLKMIERKISLLTKEKLPSDELYDHWIYTNDQKKNNLSKKFRNQMETVNKESITLDVFEKRTRLCNDENKKKYLPKIYDPFLNGPGRGRVKFFFSSQILNKMSIKNYIETGWINKIHSILFTTDQEKLEEKIDTFDKNSLSTEKKLSLFPFPETEQGRIHSEDQIKILKIFFNAVITEPKTKRIKKKSIGIKEISTKVPSWSYKLINDLEQQEGENEEMVAEDHEIRSRKTKHVLIFTDNDENTDANSKNTNNLDEADEVTFIRYSQQSDFRRDIIKGSMRAQRRKTVICELFQANVHSPLFLDRIGKPLFSFDISGMIKFILKKWMYKKTTELRISDYTQEKKKENEKKKEEDKREEYKRQEKARIEIAQTWDRVLFAQAIRGSLLVTQSFLRKYILFPSVIIAKNIARILLFQFPEWSEDLKDWNREMHVKCTYNGVQLSETEFPKNWLTDGIQIKILFPFYIKPWHRSKVPPRQKDRLRNKEQKNDFCFLTVWGMETEVPFGSPRKQRSFFEPIFKELRKKIIKLQKNPFLVIQVLKERINLFLNLSKERKKSVMKTILFLKGIIKELSKRNPIQLFGLRKIDELSETKKEKNGVISNGMINESSIQIRFMDLTDSSLTEKKMKDLDDRTSTIRNQIEKITKDNKKGFLTPEININISSNKISYPTKLLASIKNIWQKLKKFKRINVRLIRKSYSFFKFLIERIYINILICIINSPRITTQLFFDNSTKMIDKYIYNNETNKEKIAKTNKNTIRFIWTKKKSISDISKKNSKILLSSFSQAYVFYQLYQTQFCNLYKLRYVLQYHGTSFFLKNEIKDYFETQGIFYPELKHKNILNSEMIQWKNWLRGHYQYDLSPIRWYRLVPHKWRNRFNQTRLVQNKDLNKRHSDEKDRLILINYKKLNDFELNSLSNSKYNLQKYYGYDLFSYKSINYENKKDSHIYVSPLRLNNKQEISYNYNKIYKKGKLINMPGGIIPINLEDDDILNLXKFTDRKYLDWRIFDFCLRNKVNIESWIDIDTNGNKNTKTGFNNYQIIDKMDQKGIFFLKICQNGGIMASNKKKDLFDWMAMNEEILSRPISNLNLWFFPEFVILYNTYIMKPWIIPIQLLLLNFYENVSENKNITRKNKRDLFLFSNEKKSIELENRNQEEKESAIRDNLESDAQNQANLGSLFSNQEKDIGEDYASSDMKKRRKKKEYKSNTEVELYFFLKRYLRIQLRWDDSLNQRMINNIKIYCLLLRLINPREIAISSIQRGEMSLDILITQKDLTLTELMKKGILIIEPIRLSIKNDGQLIMYQSLNISLFHKSKPKINQIYREKSYVAKINLDKSIARHPKMAENRYKNDYDLLFVPEKVLSTKRRRELRIRICFNSRKRNGIHKNPVFCNNVKNWGEFLDKRKHFEKKKLIKLKFFLWPNYRLEDLSCMNRYWFDTNNGGRFTMIRIHMYPRLQIC.

A run of 6 helical transmembrane segments spans residues 18–38, 67–87, 90–110, 127–147, 175–195, and 224–244; these read IINS…FSIG, FIAG…HLAL, PHTI…WNNH, LSIQ…HFIL, VGWL…LVWI, and IFSI…PSPI. The span at 249–258 shows a compositional bias: basic and acidic residues; that stretch reads FKETSETEER. The disordered stretch occupies residues 249–308; the sequence is FKETSETEERGEGEEETDVEIETTFETKGTRQEQEGSTEEDPSLFSEEKEDPDKIDEREE. Composition is skewed to acidic residues over residues 259-271 and 284-298; these read GEGE…EIET and GSTE…EEKE. The span at 299–308 shows a compositional bias: basic and acidic residues; that stretch reads DPDKIDEREE.

It belongs to the TIC214 family. Part of the Tic complex.

It localises to the plastid. The protein resides in the chloroplast inner membrane. Its function is as follows. Involved in protein precursor import into chloroplasts. May be part of an intermediate translocation complex acting as a protein-conducting channel at the inner envelope. This is Protein TIC 214 from Eucalyptus globulus subsp. globulus (Tasmanian blue gum).